A 223-amino-acid polypeptide reads, in one-letter code: Probable transaldolase (223 aa).

Lys86 serves as the catalytic Schiff-base intermediate with substrate.

Belongs to the transaldolase family. Type 3B subfamily.

Its subcellular location is the cytoplasm. The enzyme catalyses D-sedoheptulose 7-phosphate + D-glyceraldehyde 3-phosphate = D-erythrose 4-phosphate + beta-D-fructose 6-phosphate. It participates in carbohydrate degradation; pentose phosphate pathway; D-glyceraldehyde 3-phosphate and beta-D-fructose 6-phosphate from D-ribose 5-phosphate and D-xylulose 5-phosphate (non-oxidative stage): step 2/3. In terms of biological role, transaldolase is important for the balance of metabolites in the pentose-phosphate pathway. The protein is Probable transaldolase (tal) of Thermoplasma volcanium (strain ATCC 51530 / DSM 4299 / JCM 9571 / NBRC 15438 / GSS1).